A 335-amino-acid chain; its full sequence is Glycerol-3-phosphate dehydrogenase [NAD(P)+] (335 aa).

NADPH is bound by residues Ser-12, Trp-13, and Lys-107. Residues Lys-107, Gly-138, and Ser-140 each contribute to the sn-glycerol 3-phosphate site. Residue Ala-142 coordinates NADPH. Positions 193, 246, 256, 257, and 258 each coordinate sn-glycerol 3-phosphate. Lys-193 acts as the Proton acceptor in catalysis. Arg-257 contributes to the NADPH binding site. NADPH contacts are provided by Val-281 and Glu-283.

Belongs to the NAD-dependent glycerol-3-phosphate dehydrogenase family.

It localises to the cytoplasm. It carries out the reaction sn-glycerol 3-phosphate + NAD(+) = dihydroxyacetone phosphate + NADH + H(+). The catalysed reaction is sn-glycerol 3-phosphate + NADP(+) = dihydroxyacetone phosphate + NADPH + H(+). It functions in the pathway membrane lipid metabolism; glycerophospholipid metabolism. Its function is as follows. Catalyzes the reduction of the glycolytic intermediate dihydroxyacetone phosphate (DHAP) to sn-glycerol 3-phosphate (G3P), the key precursor for phospholipid synthesis. This chain is Glycerol-3-phosphate dehydrogenase [NAD(P)+], found in Geobacter sp. (strain M21).